Consider the following 37-residue polypeptide: Large ribosomal subunit protein bL36c (37 aa).

The protein belongs to the bacterial ribosomal protein bL36 family.

The protein resides in the plastid. The chain is Large ribosomal subunit protein bL36c from Aneura mirabilis (Parasitic liverwort).